A 600-amino-acid polypeptide reads, in one-letter code: KIF-binding protein (600 aa).

Residues 384–434 (KAENEATEYSKIMQDYAEAYEHIAFFEENPENQAKMQKRRAKYLEDLLDLL) adopt a coiled-coil conformation.

Belongs to the KIF-binding protein family.

The protein resides in the cytoplasm. It localises to the cytoskeleton. The protein is KIF-binding protein of Drosophila melanogaster (Fruit fly).